The primary structure comprises 1422 residues: Guanine nucleotide exchange factor subunit RIC1 (1422 aa).

WD repeat units lie at residues 64-103 (TQFGSYKQAEWRPDSTMIAVSTANGYILFFHITSSRGDKY) and 304-343 (NKTGAVKLIRWSPDNSAVIVTWEYGGLSLWSVFGAQLICT). 2 disordered regions span residues 442-462 (NPKYSSARAERMPRHEKSPFA) and 986-1005 (SGESETPPSTPTSQEPSSSG). Residues 449 to 460 (RAERMPRHEKSP) show a composition bias toward basic and acidic residues. A phosphothreonine mark is found at Thr991 and Thr995. Ser1014, Ser1016, Ser1018, Ser1036, and Ser1171 each carry phosphoserine. The disordered stretch occupies residues 1021–1048 (AENVPPGKFGLQKTLSMPTGPSGKRWSK). Disordered stretches follow at residues 1179-1198 (THRDTDRASSPGPQMQDAFL) and 1355-1422 (DTFQ…CSVS). Polar residues predominate over residues 1378-1396 (GSCSHGSISQSEPGSNNVV). The segment covering 1403 to 1412 (TTQADEEEPL) has biased composition (acidic residues).

The protein belongs to the RIC1 family. As to quaternary structure, forms a complex with RGP1; the interaction enhances RAB6A GTPase activity. Interacts (via central domain) with RGP1. Interacts with RAB6A; the interaction is direct with a preference for RAB6A-GDP. Interacts (via C-terminus domain) with RAB33B; the interaction is direct with a preference for RAB33B-GTP. Interacts with GJA1. As to expression, expressed in the eye lens.

The protein resides in the cytoplasm. The protein localises to the cytosol. Its subcellular location is the membrane. Its function is as follows. The RIC1-RGP1 complex acts as a guanine nucleotide exchange factor (GEF), which activates RAB6A by exchanging bound GDP for free GTP, and may thereby be required for efficient fusion of endosome-derived vesicles with the Golgi compartment. The RIC1-RGP1 complex participates in the recycling of mannose-6-phosphate receptors. Required for phosphorylation and localization of GJA1. Is a regulator of procollagen transport and secretion, and is required for correct cartilage morphogenesis and development of the craniofacial skeleton. The polypeptide is Guanine nucleotide exchange factor subunit RIC1 (Mus musculus (Mouse)).